A 43-amino-acid polypeptide reads, in one-letter code: S-layer protein 1 (43 aa).

The protein localises to the secreted. Its subcellular location is the cell wall. It localises to the S-layer. Its function is as follows. The S-layer is a paracrystalline mono-layered assembly of proteins which coat the surface of bacteria. The sequence is that of S-layer protein 1 from Bacillus thuringiensis subsp. konkukian.